A 164-amino-acid chain; its full sequence is Phosphopantetheine adenylyltransferase (164 aa).

Threonine 9 provides a ligand contact to substrate. ATP-binding positions include 9–10 (TF) and histidine 17. Lysine 41, threonine 76, and arginine 90 together coordinate substrate. Residues 91 to 93 (GLR), glutamate 101, and 126 to 132 (YQFVSSS) each bind ATP.

The protein belongs to the bacterial CoaD family. As to quaternary structure, homohexamer. Mg(2+) serves as cofactor.

It is found in the cytoplasm. It carries out the reaction (R)-4'-phosphopantetheine + ATP + H(+) = 3'-dephospho-CoA + diphosphate. Its pathway is cofactor biosynthesis; coenzyme A biosynthesis; CoA from (R)-pantothenate: step 4/5. Its function is as follows. Reversibly transfers an adenylyl group from ATP to 4'-phosphopantetheine, yielding dephospho-CoA (dPCoA) and pyrophosphate. This chain is Phosphopantetheine adenylyltransferase, found in Coprothermobacter proteolyticus (strain ATCC 35245 / DSM 5265 / OCM 4 / BT).